A 570-amino-acid chain; its full sequence is Methionine--tRNA ligase (570 aa).

The short motif at 14–24 (PYINGIKHLGN) is the 'HIGH' region element. Zn(2+) contacts are provided by C146, C149, C159, and C162. Positions 347 to 351 (QFSTS) match the 'KMSKS' region motif. An ATP-binding site is contributed by T350.

Belongs to the class-I aminoacyl-tRNA synthetase family. MetG type 1 subfamily. Monomer. The cofactor is Zn(2+).

Its subcellular location is the cytoplasm. The catalysed reaction is tRNA(Met) + L-methionine + ATP = L-methionyl-tRNA(Met) + AMP + diphosphate. Its function is as follows. Is required not only for elongation of protein synthesis but also for the initiation of all mRNA translation through initiator tRNA(fMet) aminoacylation. The sequence is that of Methionine--tRNA ligase from Jannaschia sp. (strain CCS1).